A 343-amino-acid polypeptide reads, in one-letter code: MSDQSMSVTLLAIESSCDETAAAVIQDGNILCNIVASQRIHEKYGGIVPELASRAHQQHIIPVVAQALLEANIQKSDLNAVACTSGPGLLGALLVGVSFSKAFASALHIPVIKVNHMKAHILAHFIGDVKPSFPFICMTVSGGHTQLVIVRNYLEMEVVGETQDDAVGEAFDKTAKLMGLPYPGGPLIDSYAKQGNPLAFPFPTVDMPGYNYSFSGIKTAFMYFLKKNTAVDPDFIQKNLPDICASVQHALIDVLMRKLKRLVVDTGINRVAIAGGVSANSGLRKAMEQKREQEGWDVYIPAFEYCTDNAAMIAVAGYHQYLENDFAGWDLSPEPRLRIGGGL.

The Fe cation site is built by H116 and H120. Substrate contacts are provided by residues 139–143 (TVSGG), D172, G185, D189, and N280. D308 lines the Fe cation pocket.

It belongs to the KAE1 / TsaD family. Fe(2+) is required as a cofactor.

Its subcellular location is the cytoplasm. The enzyme catalyses L-threonylcarbamoyladenylate + adenosine(37) in tRNA = N(6)-L-threonylcarbamoyladenosine(37) in tRNA + AMP + H(+). In terms of biological role, required for the formation of a threonylcarbamoyl group on adenosine at position 37 (t(6)A37) in tRNAs that read codons beginning with adenine. Is involved in the transfer of the threonylcarbamoyl moiety of threonylcarbamoyl-AMP (TC-AMP) to the N6 group of A37, together with TsaE and TsaB. TsaD likely plays a direct catalytic role in this reaction. The protein is tRNA N6-adenosine threonylcarbamoyltransferase of Cytophaga hutchinsonii (strain ATCC 33406 / DSM 1761 / CIP 103989 / NBRC 15051 / NCIMB 9469 / D465).